Consider the following 380-residue polypeptide: Ankyrin repeat domain-containing protein 63 (380 aa).

ANK repeat units follow at residues 11-40, 46-79, 83-112, 116-145, and 153-182; these read AGTR…RSII, QGRT…AVNL, RGRT…DPEA, AGNS…RLGL, and AGLT…RAAA. Composition is skewed to low complexity over residues 181–203 and 216–226; these read AAAA…PAAS and RPLLARFARAA. Residues 181–256 form a disordered region; it reads AAAAAARGSN…GSERPELGRS (76 aa). Ser-193 is subject to Phosphoserine. Ser-294 is modified (phosphoserine). Residues 309–368 are disordered; the sequence is PIGLSPHPEGGPGSGRLGLRRRSTAPDIPSLVGEAPGPESGPELEANALSVSVPGPNPWQ.

The chain is Ankyrin repeat domain-containing protein 63 from Homo sapiens (Human).